The sequence spans 230 residues: Cysteine S-methyltransferase OspZ (230 aa).

The interval 49 to 52 is interaction with host proteins TAB2, TAB3 and ZRANB3; the sequence is GITR. S-adenosyl-L-methionine contacts are provided by alanine 92, serine 98, arginine 107, glutamine 111, tyrosine 204, and glutamate 208.

It belongs to the NleE/OspZ family. As to quaternary structure, monomer.

It localises to the secreted. It is found in the host cytoplasm. The protein localises to the host nucleus. It carries out the reaction L-cysteinyl-[protein] + S-adenosyl-L-methionine = S-methyl-L-cysteinyl-[protein] + S-adenosyl-L-homocysteine + H(+). Cysteine methyltransferase effector that inhibits host cell NF-kappa-B activation by preventing nuclear translocation of host protein RELA/p65. Acts by mediating cysteine methylation of host proteins TAB2 and TAB3: methylation of a conserved cysteine residue of the RanBP2-type zinc finger (NZF) of TAB2 and TAB3 disrupts zinc-binding, thereby inactivating the ubiquitin chain-binding activity of TAB2 and TAB3, leading to NF-kappa-B inactivation. Also mediates cysteine methylation of host protein ZRANB3, inactivating its ability to bind ubiquitin chains. This is Cysteine S-methyltransferase OspZ from Shigella flexneri.